The following is a 129-amino-acid chain: Large ribosomal subunit protein bL12c (129 aa).

It belongs to the bacterial ribosomal protein bL12 family. In terms of assembly, homodimer. Part of the ribosomal stalk of the 50S ribosomal subunit. Forms a multimeric L10(L12)X complex, where L10 forms an elongated spine to which 2 to 4 L12 dimers bind in a sequential fashion. Binds GTP-bound translation factors.

Its subcellular location is the plastid. It is found in the chloroplast. Forms part of the ribosomal stalk which helps the ribosome interact with GTP-bound translation factors. Is thus essential for accurate translation. The chain is Large ribosomal subunit protein bL12c from Tupiella akineta (Green alga).